A 314-amino-acid polypeptide reads, in one-letter code: uncharacterized protein (314 aa).

The transit peptide at 1 to 29 (MMRLIRTLPLRCFKTRIRRQGSLLCLRCF) directs the protein to the mitochondrion. Residues 52–74 (SSSPLSKNKEKQEKPEKENEGKH) are disordered. Residues 58–74 (KNKEKQEKPEKENEGKH) show a composition bias toward basic and acidic residues. Residues 177–207 (LNEHHLQLLKLKRELNSIHDELNEIIIDLLQ) are a coiled coil. Residues 262–279 (GLLVILVLVCSIMIGVSA) traverse the membrane as a helical segment. The segment at 281-314 (KKERPGLQEPEEPEILAPKEDIDTTFPQDQHDID) is disordered.

It is found in the mitochondrion membrane. This is an uncharacterized protein from Saccharomyces cerevisiae (strain ATCC 204508 / S288c) (Baker's yeast).